The sequence spans 529 residues: ADP,ATP carrier protein 1 (529 aa).

12 consecutive transmembrane segments (helical) span residues 24–44 (LKKV…YTIL), 63–83 (IPFI…LIYA), 93–113 (ALFY…PLVI), 124–144 (DFAD…IAML), 149–169 (FAAF…LMFW), 184–204 (FYAL…PAIV), 220–240 (WGVT…IIAA), 284–304 (YMLL…LVEV), 322–342 (AFMG…MLFI), 356–376 (ALVT…LVIF), 381–401 (TGLV…VGAV), and 463–483 (ISAM…VWLT). Low complexity predominate over residues 509-520 (AAEKEASPAAKE). Positions 509–529 (AAEKEASPAAKEVSPAIEGVS) are disordered.

Belongs to the ADP/ATP translocase tlc family.

Its subcellular location is the cell membrane. This chain is ADP,ATP carrier protein 1 (tlcA), found in Chlamydia muridarum (strain MoPn / Nigg).